The chain runs to 238 residues: ATP-dependent dethiobiotin synthetase BioD (238 aa).

12–17 serves as a coordination point for ATP; that stretch reads EVGKTV. Thr16 is a binding site for Mg(2+). The active site involves Lys37. Thr41 contributes to the substrate binding site. ATP-binding positions include Asp50, 109-112, 170-171, and 200-202; these read EGAG, GS, and PAG. Mg(2+)-binding residues include Asp50 and Glu109.

This sequence belongs to the dethiobiotin synthetase family. As to quaternary structure, homodimer. Mg(2+) is required as a cofactor.

The protein localises to the cytoplasm. The enzyme catalyses (7R,8S)-7,8-diammoniononanoate + CO2 + ATP = (4R,5S)-dethiobiotin + ADP + phosphate + 3 H(+). The protein operates within cofactor biosynthesis; biotin biosynthesis; biotin from 7,8-diaminononanoate: step 1/2. Functionally, catalyzes a mechanistically unusual reaction, the ATP-dependent insertion of CO2 between the N7 and N8 nitrogen atoms of 7,8-diaminopelargonic acid (DAPA, also called 7,8-diammoniononanoate) to form a ureido ring. This is ATP-dependent dethiobiotin synthetase BioD from Streptomyces coelicolor (strain ATCC BAA-471 / A3(2) / M145).